A 70-amino-acid polypeptide reads, in one-letter code: Conotoxin Mr3.8 (70 aa).

The first 24 residues, 1-24 (MLKMGVVLFIFLVLFPLATLQLDA), serve as a signal peptide directing secretion. Positions 25 to 54 (DQPVERYAKNKQLFNPHKRRGIILRAPGKR) are excised as a propeptide. Disulfide bonds link cysteine 55–cysteine 67, cysteine 56–cysteine 68, and cysteine 61–cysteine 65.

The protein belongs to the conotoxin M superfamily. In terms of tissue distribution, expressed by the venom duct.

Its subcellular location is the secreted. In vitro, inhibits proliferation of the mice ovarian cancer cells ID8. This Conus marmoreus (Marble cone) protein is Conotoxin Mr3.8.